Here is a 716-residue protein sequence, read N- to C-terminus: Segment polarity protein dishevelled homolog DVL-3 (716 aa).

One can recognise a DIX domain in the interval 1-82; that stretch reads MGETKIIYHL…RVVSWLVSAE (82 aa). An Omega-N-methylarginine modification is found at arginine 27. 2 positions are modified to phosphoserine: serine 48 and serine 125. The disordered stretch occupies residues 85 to 235; that stretch reads HPDPAPFCAD…VSRIERSSSF (151 aa). Residues 142–156 show a composition bias toward basic and acidic residues; the sequence is QRERPRRRDGPEHAT. Positions 175–190 are enriched in low complexity; that stretch reads SSSTLMSSELETTSFF. Phosphoserine is present on serine 192. The segment covering 199–212 has biased composition (low complexity); it reads SRFSSSTEQSSASR. Position 212 is an omega-N-methylarginine (arginine 212). The span at 213 to 226 shows a compositional bias: basic residues; the sequence is LMRRHKRRRRKQKV. In terms of domain architecture, PDZ spans 249–321; the sequence is TVTLNMEKYN…NDDAVRVLRE (73 aa). Arginine 271 is subject to Asymmetric dimethylarginine; by PRMT1; alternate. Symmetric dimethylarginine; by PRMT7; alternate is present on residues arginine 271 and arginine 342. Arginine 342 carries the post-translational modification Omega-N-methylarginine; alternate. Threonine 346 carries the phosphothreonine modification. The region spanning 422–496 is the DEP domain; the sequence is PESGLEVRDR…SEQCYYIFGD (75 aa). Residues 546-691 are disordered; sequence PYNPHPGFPE…PPGRDLASVP (146 aa). Residues 565–581 are compositionally biased toward low complexity; sequence ASSQHSEGSRSSGSNRS. Composition is skewed to basic and acidic residues over residues 582–595 and 604–622; these read GSDRRKEKDPKAGD and ESDHTTRSSLRGPRERAPS. Position 614 is a symmetric dimethylarginine; by PRMT7 (arginine 614). The span at 653 to 682 shows a compositional bias: pro residues; that stretch reads YGPPGVPPLYGPPMLMMPPPPAAMGPPGAP. Position 697 is a phosphoserine (serine 697). Arginine 698 carries the omega-N-methylarginine; alternate modification. Dimethylated arginine; alternate is present on arginine 698. Position 700 is a phosphoserine (serine 700).

It belongs to the DSH family. In terms of assembly, interacts (via the PDZ domain) with the C-terminal regions of VANGL1 and VANGL2. Interacts (via the region containing both the PDZ and DEP domains) with LRRFIP2; the DIX domain may inhibit this interaction. Interacts with CYLD, CEP164 and DAB2. Interacts with DCDC2. Interacts with FOXK1 and FOXK2. Interacts with DAAM2. In terms of processing, ubiquitinated. Deubiquitinated by CYLD, which acts on 'Lys-63'-linked ubiquitin chains. Post-translationally, phosphorylated by CSNK1D. Arginine methylation may function as a switch in regulation of function in Wnt signaling.

The protein localises to the cytoplasm. Involved in the signal transduction pathway mediated by multiple Wnt genes. The polypeptide is Segment polarity protein dishevelled homolog DVL-3 (DVL3) (Homo sapiens (Human)).